A 61-amino-acid chain; its full sequence is Lens epithelial cell protein LEP503 (61 aa).

In terms of tissue distribution, preferentially expressed in the lens epithelial cells.

This is Lens epithelial cell protein LEP503 (Lenep) from Rattus norvegicus (Rat).